Here is a 35-residue protein sequence, read N- to C-terminus: Photosystem II reaction center protein T (35 aa).

Residues 3 to 23 (AFAYTLLMTLVVATLFFAVAF) form a helical membrane-spanning segment.

The protein belongs to the PsbT family. As to quaternary structure, PSII is composed of 1 copy each of membrane proteins PsbA, PsbB, PsbC, PsbD, PsbE, PsbF, PsbH, PsbI, PsbJ, PsbK, PsbL, PsbM, PsbT, PsbX, PsbY, Psb30/Ycf12, peripheral proteins PsbO, CyanoQ (PsbQ), PsbU, PsbV and a large number of cofactors. It forms dimeric complexes.

Its subcellular location is the cellular thylakoid membrane. Found at the monomer-monomer interface of the photosystem II (PS II) dimer, plays a role in assembly and dimerization of PSII. PSII is a light-driven water plastoquinone oxidoreductase, using light energy to abstract electrons from H(2)O, generating a proton gradient subsequently used for ATP formation. This is Photosystem II reaction center protein T from Prochlorococcus marinus (strain MIT 9303).